The sequence spans 147 residues: UPF0306 protein YhbP (147 aa).

This sequence belongs to the UPF0306 family.

This chain is UPF0306 protein YhbP, found in Salmonella choleraesuis (strain SC-B67).